We begin with the raw amino-acid sequence, 93 residues long: Hematopoietic cell signal transducer (93 aa).

The first 18 residues, 1 to 18 (MIHLGHILFLLLLPVAAA), serve as a signal peptide directing secretion. Residues 19–48 (QTTPGERSSLPAFYPGTSGSCSGCGSLSLP) lie on the Extracellular side of the membrane. Residues 49 to 69 (LLAGLVAADAVASLLIVGAVF) traverse the membrane as a helical segment. The Cytoplasmic portion of the chain corresponds to 70 to 93 (LCARPRRSPAQEDGKVYINMPGRG). Position 86 is a phosphotyrosine (tyrosine 86). Residues 86–88 (YIN) are GRB2 binding site. A PIK3R1 binding site region spans residues 86–89 (YINM).

Belongs to the DAP10 family. Interacts with CLEC5A. Forms an CLEC5A/TYROBP/HCST trimolecular complex depending almost solely on TYROBP. Homodimer; Disulfide-linked. Heterohexamer composed of four subunits of HCST/DAP10 and two subunits of KLRK1. Interacts (via transmembrane domain) with KLRK1 (via transmembrane domain); the interaction is required for KLRK1 NK cell surface and induces NK cell-mediated cytotoxicity. Interacts with PIK3R1 and GRB2. Interacts with CD300H. Post-translationally, phosphorylated; PIK3R1 and GRB2 associate specifically with tyrosine-phosphorylated HCST. In terms of processing, O-glycosylated. In terms of tissue distribution, predominantly expressed in hemopoietic cells such as NK cells, subset of T-cells and monocytes. Detected in leukocytes, spleen, and thymus.

It localises to the membrane. Transmembrane adapter protein which associates with KLRK1 to form an activation receptor KLRK1-HCST in lymphoid and myeloid cells; this receptor plays a major role in triggering cytotoxicity against target cells expressing cell surface ligands such as MHC class I chain-related MICA and MICB, and UL16-binding proteins (ULBPs); these ligands are up-regulated by stress conditions and pathological state such as viral infection and tumor transformation. Functions as a docking site for PI3-kinase PIK3R1 and GRB2. Interaction of ULBPs with KLRK1-HCST triggers calcium mobilization and activation of the PIK3R1, MAP2K/ERK, and JAK2/STAT5 signaling pathways. Both PIK3R1 and GRB2 are required for full KLRK1-HCST-mediated activation and ultimate killing of target cells. In NK cells, KLRK1-HCST signaling directly induces cytotoxicity and enhances cytokine production initiated via DAP12/TYROBP-associated receptors. In T-cells, it provides primarily costimulation for TCR-induced signals. KLRK1-HCST receptor plays a role in immune surveillance against tumors and is required for cytolysis of tumors cells; indeed, melanoma cells that do not express KLRK1 ligands escape from immune surveillance mediated by NK cells. The chain is Hematopoietic cell signal transducer (HCST) from Homo sapiens (Human).